A 1017-amino-acid polypeptide reads, in one-letter code: MKLLKPTWVNHNGKPIFSVDIHPDGTKFATGGQGQDSGKVVIWNMSPVLQEDDEKDENIPKMLCQMDNHLACVNCVRWSNSGMYLASGGDDKLIMVWKRATYIGPSTVFGSSGKLANVEQWRCVSILRNHSGDVMDVAWSPHDAWLASCSVDNTVVIWNAVKFPEILATLRGHSGLVKGLTWDPVGKYIASQADDRSLKVWRTLDWQLETSITKPFDECGGTTHVLRLSWSPDGHYLVSAHAMNNSGPTAQIIEREGWKTNMDFVGHRKAVTVVKFNPKIFKKKQKNGSSAKPSCPYCCCAVGSKDRSLSVWLTCLKRPLVVIHELFDKSIMDISWTLNGLGILVCSMDGSVAFLDFSQDELGDPLSEEEKSRIHQSTYGKSLAIMTEAQLSTAVIENPEMLKYQRRQQQQQLDQKSAATREMGSATSVAGVVNGESLEDIRKNLLKKQVETRTADGRRRITPLCIAQLDTGDFSTAFFNSIPLSGSLAGTMLSSHSSPQLLPLDSSTPNSFGASKPCTEPVVAASARPAGDSVNKDSMNATSTPAALSPSVLTTPSKIEPMKAFDSRFTERSKATPGAPALTSMTPTAVERLKEQNLVKELRPRDLLESSSDSDEKVPLAKASSLSKRKLELEVETVEKKKKGRPRKDSRLMPVSLSVQSPAALTAEKEAMCLSAPALALKLPIPSPQRAFTLQVSSDPSMYIEVENEVTVVGGVKLSRLKCNREGKEWETVLTSRILTAAGSCDVVCVACEKRMLSVFSTCGRRLLSPILLPSPISTLHCTGSYVMALTAAATLSVWDVHRQVVVVKEESLHSILAGSDMTVSQILLTQHGIPVMNLSDGKAYCFNPSLSTWNLVSDKQDSLAQCADFRSSLPSQDAMLCSGPLAIIQGRTSNSGRQAARLFSVPHVVQQETTLAYLENQVAAALTLQSSHEYRHWLLVYARYLVNEGFEYRLREICKDLLGPVHYSTGSQWESTVVGLRKRELLKELLPVIGQNLRFQRLFTECQEQLDILRDK.

WD repeat units lie at residues 11-53 and 68-107; these read HNGK…QEDD and NHLACVNCVRWSNSGMYLASGGDDKLIMVWKRATYIGPST. S111 carries the post-translational modification Phosphoserine. WD repeat units lie at residues 129 to 168, 172 to 211, 220 to 263, 266 to 322, and 326 to 367; these read NHSGDVMDVAWSPHDAWLASCSVDNTVVIWNAVKFPEILA, GHSGLVKGLTWDPVGKYIASQADDRSLKVWRTLDWQLETS, GGTT…TNMD, GHRK…PLVV, and LFDK…DPLS. The interval 421 to 479 is interaction with ASF1A; sequence REMGSATSVAGVVNGESLEDIRKNLLKKQVETRTADGRRRITPLCIAQLDTGDFSTAFF. The tract at residues 421–729 is interaction with CCNA1; it reads REMGSATSVA…RLKCNREGKE (309 aa). Positions 439 to 475 are required for repression of histone gene transcription; it reads EDIRKNLLKKQVETRTADGRRRITPLCIAQLDTGDFS. Low complexity predominate over residues 494-509; sequence SSHSSPQLLPLDSSTP. A disordered region spans residues 494–555; the sequence is SSHSSPQLLP…AALSPSVLTT (62 aa). Over residues 536–555 the composition is skewed to polar residues; it reads KDSMNATSTPAALSPSVLTT. Position 549 is a phosphoserine (S549). T555 is modified (phosphothreonine; by CDK2). Residue S557 is modified to Phosphoserine. Disordered stretches follow at residues 570–589 and 604–625; these read TERSKATPGAPALTSMTPTA and PRDLLESSSDSDEKVPLAKASS. Residue T576 is modified to Phosphothreonine. S584 is subject to Phosphoserine. T586 carries the phosphothreonine modification. The interaction with histone H2B stretch occupies residues 593–826; the sequence is LKEQNLVKEL…LAGSDMTVSQ (234 aa). 2 interaction with PAX3 regions span residues 594–739 and 740–828; these read KEQN…SRIL and TAAG…SQIL. The segment covering 604–619 has biased composition (basic and acidic residues); it reads PRDLLESSSDSDEKVP. 7 positions are modified to phosphoserine: S610, S611, S612, S614, S661, S675, and S687. Residues 738-1017 form an interaction with histone H4 region; the sequence is ILTAAGSCDV…QEQLDILRDK (280 aa).

Belongs to the WD repeat HIR1 family. As to quaternary structure, interacts with histone H3-3B, PAX3 and PAX7. Interacts with histone H3.Y. Interacts with CCNA1, HIRIP3, NFU1/HIRIP5 and histone H2B. Part of a complex which includes ASF1A, CABIN1, histone H3.3, histone H4 and UBN1. Post-translationally, sumoylated. In terms of processing, phosphorylated by CDK2/CCNA1 and CDK2/CCNE1 on Thr-555 in vitro. Also phosphorylated on Thr-555 and Ser-687 in vivo. As to expression, expressed at high levels in kidney, pancreas and skeletal muscle and at lower levels in brain, heart, liver, lung, and placenta.

It is found in the nucleus. It localises to the PML body. Cooperates with ASF1A to promote replication-independent chromatin assembly. Required for the periodic repression of histone gene transcription during the cell cycle. Required for the formation of senescence-associated heterochromatin foci (SAHF) and efficient senescence-associated cell cycle exit. The protein is Protein HIRA (HIRA) of Homo sapiens (Human).